The chain runs to 506 residues: Glutamate--tRNA ligase (506 aa).

Residues 24–34 (PSPTGTPHVGL) carry the 'HIGH' region motif. Residues 124–147 (TPEEVEQRHRAKGEDPKRGYDNYD) are disordered. The segment covering 128-147 (VEQRHRAKGEDPKRGYDNYD) has biased composition (basic and acidic residues). The 'KMSKS' region motif lies at 268-272 (KLSKR). Lys271 lines the ATP pocket.

This sequence belongs to the class-I aminoacyl-tRNA synthetase family. Glutamate--tRNA ligase type 1 subfamily. In terms of assembly, monomer.

The protein resides in the cytoplasm. It carries out the reaction tRNA(Glu) + L-glutamate + ATP = L-glutamyl-tRNA(Glu) + AMP + diphosphate. Functionally, catalyzes the attachment of glutamate to tRNA(Glu) in a two-step reaction: glutamate is first activated by ATP to form Glu-AMP and then transferred to the acceptor end of tRNA(Glu). In Kocuria rhizophila (strain ATCC 9341 / DSM 348 / NBRC 103217 / DC2201), this protein is Glutamate--tRNA ligase.